The primary structure comprises 167 residues: Gametocyte-specific factor 1 (167 aa).

Residue S8 is modified to Phosphoserine. 2 CHHC U11-48K-type zinc fingers span residues 14–41 (LLQC…RKNH) and 48–75 (LATC…DDKS). 8 residues coordinate Zn(2+): C17, H23, H33, C37, C51, H57, H67, and C71.

The protein belongs to the UPF0224 (FAM112) family. As to expression, expressed abundantly in adult testis, at moderate levels in unfertilized eggs and ovaries and weakly in embryonic stem cells.

It is found in the cytoplasm. Its function is as follows. Required for spermatogenesis and is involved in the suppression of retrotransposon transcription in male germ cells. The polypeptide is Gametocyte-specific factor 1 (Mus musculus (Mouse)).